The primary structure comprises 313 residues: Homeobox protein knotted-1-like 2 (313 aa).

Positions Asp-13–Glu-40 are disordered. Residues Pro-14–Ser-27 show a composition bias toward low complexity. The segment covering Pro-28–Gly-38 has biased composition (gly residues). The ELK domain occupies Glu-205–Ile-225. Residues Leu-226–Asn-289 constitute a DNA-binding region (homeobox; TALE-type). The disordered stretch occupies residues Arg-282–Trp-313.

This sequence belongs to the TALE/KNOX homeobox family. As to expression, isoform 1 is expressed in roots, leaf blades, leaf sheaths and flowers. Isoform 2 is expressed in leaf blades, leaf sheaths and flowers.

The protein resides in the nucleus. This chain is Homeobox protein knotted-1-like 2 (HOS58), found in Oryza sativa subsp. japonica (Rice).